Consider the following 575-residue polypeptide: 2-isopropylmalate synthase (575 aa).

The Pyruvate carboxyltransferase domain maps to 40 to 314 (PRWCAVDLRD…DPQIDFSDID (275 aa)). The Mg(2+) site is built by Asp-49, His-253, His-255, and Asn-289. Positions 456-575 (SGSGTPEWGR…IVSAVNRALR (120 aa)) are regulatory domain.

The protein belongs to the alpha-IPM synthase/homocitrate synthase family. LeuA type 2 subfamily. In terms of assembly, homodimer. The cofactor is Mg(2+).

It localises to the cytoplasm. It catalyses the reaction 3-methyl-2-oxobutanoate + acetyl-CoA + H2O = (2S)-2-isopropylmalate + CoA + H(+). Its pathway is amino-acid biosynthesis; L-leucine biosynthesis; L-leucine from 3-methyl-2-oxobutanoate: step 1/4. Its function is as follows. Catalyzes the condensation of the acetyl group of acetyl-CoA with 3-methyl-2-oxobutanoate (2-ketoisovalerate) to form 3-carboxy-3-hydroxy-4-methylpentanoate (2-isopropylmalate). The chain is 2-isopropylmalate synthase from Kineococcus radiotolerans (strain ATCC BAA-149 / DSM 14245 / SRS30216).